A 296-amino-acid chain; its full sequence is uncharacterized protein (296 aa).

2 CBS domains span residues Gly-176–Val-232 and Met-236–Glu-292.

This is an uncharacterized protein from Methanocaldococcus jannaschii (strain ATCC 43067 / DSM 2661 / JAL-1 / JCM 10045 / NBRC 100440) (Methanococcus jannaschii).